The sequence spans 79 residues: Small polypeptide DEVIL 8 (79 aa).

Residues 1–12 (MSRLRNSAQLQL) show a composition bias toward polar residues. The segment at 1-37 (MSRLRNSAQLQLSKKESLGDNGGALNTTRSSRQKQGK) is disordered. A glycan (N-linked (GlcNAc...) asparagine) is linked at Asn26. Positions 39–70 (GFTRKCGRLVKEQRARFYIMRRCVVMLICWTD) are required for DVL/RTFL small polypeptide activity. The helical transmembrane segment at 55–71 (FYIMRRCVVMLICWTDH) threads the bilayer. Asn74 carries an N-linked (GlcNAc...) asparagine glycan.

This sequence belongs to the DVL/RTFL small polypeptides family.

The protein localises to the cell membrane. In terms of biological role, small polypeptide acting as a regulatory molecule which coordinates cellular responses required for differentiation, growth and development, probably by restricting polar cell proliferation in lateral organs and coordinating socket cell recruitment and differentiation at trichome sites. The polypeptide is Small polypeptide DEVIL 8 (Arabidopsis thaliana (Mouse-ear cress)).